The sequence spans 357 residues: Membrane-bound lytic murein transglycosylase C (357 aa).

An N-terminal signal peptide occupies residues 1 to 16; it reads MKKMLALLVIAPLLVS. Cysteine 17 carries the N-palmitoyl cysteine lipid modification. The S-diacylglycerol cysteine moiety is linked to residue cysteine 17.

This sequence belongs to the transglycosylase Slt family.

The protein resides in the cell outer membrane. The catalysed reaction is Exolytic cleavage of the (1-&gt;4)-beta-glycosidic linkage between N-acetylmuramic acid (MurNAc) and N-acetylglucosamine (GlcNAc) residues in peptidoglycan, from either the reducing or the non-reducing ends of the peptidoglycan chains, with concomitant formation of a 1,6-anhydrobond in the MurNAc residue.. In terms of biological role, murein-degrading enzyme. May play a role in recycling of muropeptides during cell elongation and/or cell division. The polypeptide is Membrane-bound lytic murein transglycosylase C (Pectobacterium atrosepticum (strain SCRI 1043 / ATCC BAA-672) (Erwinia carotovora subsp. atroseptica)).